Reading from the N-terminus, the 729-residue chain is Elongation factor 2 (729 aa).

Residues 19–262 (EQIRNIAIAA…MVCEHFPNPV (244 aa)) form the tr-type G domain. Residues 28–35 (AHVDHGKT), 94–98 (DTPGH), and 148–151 (NKVD) contribute to the GTP site. The residue at position 597 (H597) is a Diphthamide.

It belongs to the TRAFAC class translation factor GTPase superfamily. Classic translation factor GTPase family. EF-G/EF-2 subfamily.

It is found in the cytoplasm. Functionally, catalyzes the GTP-dependent ribosomal translocation step during translation elongation. During this step, the ribosome changes from the pre-translocational (PRE) to the post-translocational (POST) state as the newly formed A-site-bound peptidyl-tRNA and P-site-bound deacylated tRNA move to the P and E sites, respectively. Catalyzes the coordinated movement of the two tRNA molecules, the mRNA and conformational changes in the ribosome. The polypeptide is Elongation factor 2 (Natronomonas pharaonis (strain ATCC 35678 / DSM 2160 / CIP 103997 / JCM 8858 / NBRC 14720 / NCIMB 2260 / Gabara) (Halobacterium pharaonis)).